A 219-amino-acid chain; its full sequence is Thiopurine S-methyltransferase (219 aa).

4 residues coordinate S-adenosyl-L-methionine: W10, L45, E66, and R123.

The protein belongs to the class I-like SAM-binding methyltransferase superfamily. TPMT family.

Its subcellular location is the cytoplasm. It catalyses the reaction S-adenosyl-L-methionine + a thiopurine = S-adenosyl-L-homocysteine + a thiopurine S-methylether.. The chain is Thiopurine S-methyltransferase from Shewanella pealeana (strain ATCC 700345 / ANG-SQ1).